The primary structure comprises 155 residues: Small ribosomal subunit protein uS7c (155 aa).

The protein belongs to the universal ribosomal protein uS7 family. As to quaternary structure, part of the 30S ribosomal subunit.

The protein localises to the plastid. It is found in the chloroplast. In terms of biological role, one of the primary rRNA binding proteins, it binds directly to 16S rRNA where it nucleates assembly of the head domain of the 30S subunit. The polypeptide is Small ribosomal subunit protein uS7c (rps7) (Allium textile (Textile onion)).